A 156-amino-acid polypeptide reads, in one-letter code: Ribosomal RNA large subunit methyltransferase H (156 aa).

S-adenosyl-L-methionine is bound by residues Leu-73, Gly-104, and 123 to 128 (ISSMTL).

This sequence belongs to the RNA methyltransferase RlmH family. In terms of assembly, homodimer.

It is found in the cytoplasm. The catalysed reaction is pseudouridine(1915) in 23S rRNA + S-adenosyl-L-methionine = N(3)-methylpseudouridine(1915) in 23S rRNA + S-adenosyl-L-homocysteine + H(+). Its function is as follows. Specifically methylates the pseudouridine at position 1915 (m3Psi1915) in 23S rRNA. This chain is Ribosomal RNA large subunit methyltransferase H, found in Burkholderia ambifaria (strain MC40-6).